Reading from the N-terminus, the 963-residue chain is Importin-13 (963 aa).

20 HEAT repeats span residues 24–54 (ENVEKALHQLYYDPNIENKNLAQKWLMQAQA), 56–88 (PQAWHFSWQLLQPDKVPEIQYFGASALHIKISR), 95–135 (TDQY…LSMM), 142–179 (AVADMVRLFQAEDSPVDSQGRCLALLELLTVLPEEFQT), 194–231 (LAVECGAVFPLLEQLLQQPSSPSCVRQKVLKCFSSWVQ), 236–268 (LQDCEALIQAAFAALQDSELFDSSVEAIVNAIS), 276–325 (VNTL…ALLD), 330–372 (WQSF…DDIL), 375–438 (EAEK…YEML), 440–476 (AELLSNLYDKLGRLLTSSEEPYSWQHTEALLYGFQSI), 487–522 (VVPGLIGLIPRISISNVQLADTVMFTIGALSEWLAD), 524–558 (PVMINSVLPLVLHALGNPELSISSVSTLKKICREC), 562–600 (LPPYAANIVAVSQDVLMKQIHKTSQCMWLMQALGFLLSA), 603–648 (VEEI…SNLF), 676–716 (PVVV…VKTL), 720–754 (FAPMVPQLCEMLGRMYSTIPQASALDLTRQLVHIF), 761–803 (FPPI…ALKR), 815–845 (VKAVFQCAVLALKFPEAPTVKASCGFFTELL), 860–893 (EDGRMLLIAVLEAIGGQASRSLMDCFADILFALN), and 897–931 (FSLLSVWIKEALQAPGFPSARLSPEQKDTFSQQIL). The region spanning 45–111 (AQKWLMQAQA…KAQLFTQITR (67 aa)) is the Importin N-terminal domain.

It belongs to the importin beta family. As to quaternary structure, interacts with UBC9, RAN, RBM8A, eIF-1A and PAX6.

Its subcellular location is the cytoplasm. It localises to the nucleus. Functions in nuclear protein import as nuclear transport receptor. Serves as receptor for nuclear localization signals (NLS) in cargo substrates. Is thought to mediate docking of the importin/substrate complex to the nuclear pore complex (NPC) through binding to nucleoporin and the complex is subsequently translocated through the pore by an energy requiring, Ran-dependent mechanism. At the nucleoplasmic side of the NPC, Ran binds to the importin, the importin/substrate complex dissociates and importin is re-exported from the nucleus to the cytoplasm where GTP hydrolysis releases Ran. The directionality of nuclear import is thought to be conferred by an asymmetric distribution of the GTP- and GDP-bound forms of Ran between the cytoplasm and nucleus. Mediates the nuclear import of UBC9, the RBM8A/MAGOH complex, PAX6 and probably other members of the paired homeobox family. Also mediates nuclear export of eIF-1A, and the cytoplasmic release of eIF-1A is triggered by the loading of import substrates onto IPO13. This chain is Importin-13 (IPO13), found in Bos taurus (Bovine).